A 264-amino-acid polypeptide reads, in one-letter code: S-adenosylmethionine decarboxylase proenzyme (264 aa).

Serine 113 serves as the catalytic Schiff-base intermediate with substrate; via pyruvic acid. Serine 113 is modified (pyruvic acid (Ser); by autocatalysis). Histidine 118 acts as the Proton acceptor; for processing activity in catalysis. The Proton donor; for catalytic activity role is filled by cysteine 141.

It belongs to the prokaryotic AdoMetDC family. Type 2 subfamily. Heterooctamer of four alpha and four beta chains arranged as a tetramer of alpha/beta heterodimers. Pyruvate serves as cofactor. Post-translationally, is synthesized initially as an inactive proenzyme. Formation of the active enzyme involves a self-maturation process in which the active site pyruvoyl group is generated from an internal serine residue via an autocatalytic post-translational modification. Two non-identical subunits are generated from the proenzyme in this reaction, and the pyruvate is formed at the N-terminus of the alpha chain, which is derived from the carboxyl end of the proenzyme. The post-translation cleavage follows an unusual pathway, termed non-hydrolytic serinolysis, in which the side chain hydroxyl group of the serine supplies its oxygen atom to form the C-terminus of the beta chain, while the remainder of the serine residue undergoes an oxidative deamination to produce ammonia and the pyruvoyl group blocking the N-terminus of the alpha chain.

The enzyme catalyses S-adenosyl-L-methionine + H(+) = S-adenosyl 3-(methylsulfanyl)propylamine + CO2. Its pathway is amine and polyamine biosynthesis; S-adenosylmethioninamine biosynthesis; S-adenosylmethioninamine from S-adenosyl-L-methionine: step 1/1. Catalyzes the decarboxylation of S-adenosylmethionine to S-adenosylmethioninamine (dcAdoMet), the propylamine donor required for the synthesis of the polyamines spermine and spermidine from the diamine putrescine. The polypeptide is S-adenosylmethionine decarboxylase proenzyme (Xylella fastidiosa (strain 9a5c)).